Consider the following 100-residue polypeptide: Large ribosomal subunit protein bL21 (100 aa).

It belongs to the bacterial ribosomal protein bL21 family. Part of the 50S ribosomal subunit. Contacts protein L20.

In terms of biological role, this protein binds to 23S rRNA in the presence of protein L20. This Corynebacterium jeikeium (strain K411) protein is Large ribosomal subunit protein bL21.